Reading from the N-terminus, the 360-residue chain is E3 ubiquitin-protein ligase RNF146 (360 aa).

The RING-type zinc-finger motif lies at 37-75 (CAICLQTCVHPVSLPCKHVFCYLCVKGASWLGKRCALCR). Residues Lys85 and Lys95 each participate in a glycyl lysine isopeptide (Lys-Gly) (interchain with G-Cter in ubiquitin) cross-link. The WWE domain maps to 92-168 (EELKAASRGN…EHGRRRKIKR (77 aa)). 3 residues coordinate a glycoprotein: Tyr108, Arg111, and Trp115. A Glycyl lysine isopeptide (Lys-Gly) (interchain with G-Cter in ubiquitin) cross-link involves residue Lys131. Residues Tyr145, Gln154, Arg164, and Lys176 each contribute to the a glycoprotein site. Residue Lys176 forms a Glycyl lysine isopeptide (Lys-Gly) (interchain with G-Cter in ubiquitin) linkage. Residues 259-360 (ERSHRGEGEE…PDGQCTVTEV (102 aa)) form a disordered region. Positions 284–294 (SIEETESDASS) are enriched in acidic residues. 2 positions are modified to phosphoserine: Ser290 and Ser294. Over residues 295–305 (DSENVSSAVVA) the composition is skewed to low complexity. Polar residues predominate over residues 307-333 (HSLTQQRLLVSNANQTVSDRSDQSGTD).

In terms of assembly, can form homooligomers. Interacts with PARsylated AXIN1, AXIN2, BLZF1, CASC3, H1-2, IPO7, LIG3, NCL, PARP1, XRCC1, XRCC5 and XRCC6. Interacts with DDB1, DHX15, IQGAP1, LRPPRC, PARP2, PRKDC, RUVBL2, TNKS1 and TNKS2. Binding often leads to interactor ubiquitination, in the presence of the appropriate E1 and E2 enzymes, and proteasomal degradation. Ubiquitinated; autoubiquitinated. Autoubiquitination is enhanced upon poly(ADP-ribose)-binding.

It localises to the cytoplasm. It is found in the cytosol. Its subcellular location is the nucleus. The enzyme catalyses S-ubiquitinyl-[E2 ubiquitin-conjugating enzyme]-L-cysteine + [acceptor protein]-L-lysine = [E2 ubiquitin-conjugating enzyme]-L-cysteine + N(6)-ubiquitinyl-[acceptor protein]-L-lysine.. It participates in protein modification; protein ubiquitination. In terms of biological role, E3 ubiquitin-protein ligase that specifically binds poly-ADP-ribosylated (PARsylated) proteins and mediates their ubiquitination and subsequent degradation. May regulate many important biological processes, such as cell survival and DNA damage response. Acts as an activator of the Wnt signaling pathway by mediating the ubiquitination of PARsylated AXIN1 and AXIN2, 2 key components of the beta-catenin destruction complex. Acts in cooperation with tankyrase proteins (TNKS and TNKS2), which mediate PARsylation of target proteins AXIN1, AXIN2, BLZF1, CASC3, TNKS and TNKS2. Recognizes and binds tankyrase-dependent PARsylated proteins via its WWE domain and mediates their ubiquitination, leading to their degradation. Different ubiquitin linkage types have been observed: TNKS2 undergoes ubiquitination at 'Lys-48' and 'Lys-63', while AXIN1 is only ubiquitinated at 'Lys-48'. May regulate TNKS and TNKS2 subcellular location, preventing aggregation at a centrosomal location. Neuroprotective protein. Protects the brain against N-methyl-D-aspartate (NMDA) receptor-mediated glutamate excitotoxicity and ischemia, by interfering with PAR-induced cell death, called parthanatos. Prevents nuclear translocation of AIFM1 in a PAR-binding dependent manner. Does not affect PARP1 activation. Protects against cell death induced by DNA damaging agents, such as N-methyl-N-nitro-N-nitrosoguanidine (MNNG) and rescues cells from G1 arrest. Promotes cell survival after gamma-irradiation. Facilitates DNA repair. The chain is E3 ubiquitin-protein ligase RNF146 (RNF146) from Macaca fascicularis (Crab-eating macaque).